A 1413-amino-acid chain; its full sequence is DNA-directed RNA polymerase subunit beta' (1413 aa).

4 residues coordinate Zn(2+): Cys-70, Cys-72, Cys-85, and Cys-88. Asp-460, Asp-462, and Asp-464 together coordinate Mg(2+). 4 residues coordinate Zn(2+): Cys-819, Cys-893, Cys-900, and Cys-903.

This sequence belongs to the RNA polymerase beta' chain family. In terms of assembly, the RNAP catalytic core consists of 2 alpha, 1 beta, 1 beta' and 1 omega subunit. When a sigma factor is associated with the core the holoenzyme is formed, which can initiate transcription. It depends on Mg(2+) as a cofactor. Requires Zn(2+) as cofactor.

The catalysed reaction is RNA(n) + a ribonucleoside 5'-triphosphate = RNA(n+1) + diphosphate. In terms of biological role, DNA-dependent RNA polymerase catalyzes the transcription of DNA into RNA using the four ribonucleoside triphosphates as substrates. In Burkholderia multivorans (strain ATCC 17616 / 249), this protein is DNA-directed RNA polymerase subunit beta'.